A 277-amino-acid chain; its full sequence is MQDLRLMLLLFGVITIIVLFLHGVWARRKERSALFYDQKTKDQNQKEDDVLLQILDEEGVGEVKILKKAPPNVEKNAFDKAHHKKIPSQTKYQALKFDSSVACVTASSFAQISETETQLQKKSDDLSHQSKETHHPSIQKEQKVLVLHVAAHSSRNFSGETLLKSILNSHFQFGDMNIFHRYLTLTGERITLFSLANMVKPGFFDLKKMAHFSTPGISIFMTLPCYGHASENFKLMLQSAQKIADELGGLVLDDQRQMITPQKLEDYNALIRSTPHL.

The Periplasmic segment spans residues 1–5 (MQDLR). The helical transmembrane segment at 6 to 26 (LMLLLFGVITIIVLFLHGVWA) threads the bilayer. Residues 27-277 (RRKERSALFY…NALIRSTPHL (251 aa)) lie on the Cytoplasmic side of the membrane. The segment at 120-139 (QKKSDDLSHQSKETHHPSIQ) is disordered.

It belongs to the ZipA family. In terms of assembly, interacts with FtsZ via their C-terminal domains.

The protein resides in the cell inner membrane. In terms of biological role, essential cell division protein that stabilizes the FtsZ protofilaments by cross-linking them and that serves as a cytoplasmic membrane anchor for the Z ring. Also required for the recruitment to the septal ring of downstream cell division proteins. The polypeptide is Cell division protein ZipA (Hamiltonella defensa subsp. Acyrthosiphon pisum (strain 5AT)).